The sequence spans 142 residues: Large ribosomal subunit protein uL11 (142 aa).

The protein belongs to the universal ribosomal protein uL11 family. Part of the ribosomal stalk of the 50S ribosomal subunit. Interacts with L10 and the large rRNA to form the base of the stalk. L10 forms an elongated spine to which L12 dimers bind in a sequential fashion forming a multimeric L10(L12)X complex. In terms of processing, one or more lysine residues are methylated.

Its function is as follows. Forms part of the ribosomal stalk which helps the ribosome interact with GTP-bound translation factors. In Methylocella silvestris (strain DSM 15510 / CIP 108128 / LMG 27833 / NCIMB 13906 / BL2), this protein is Large ribosomal subunit protein uL11.